The chain runs to 291 residues: 4-hydroxy-tetrahydrodipicolinate synthase (291 aa).

Pyruvate is bound at residue Thr47. Tyr134 acts as the Proton donor/acceptor in catalysis. Lys162 acts as the Schiff-base intermediate with substrate in catalysis. Ile205 contributes to the pyruvate binding site.

It belongs to the DapA family. As to quaternary structure, homotetramer; dimer of dimers.

It is found in the cytoplasm. It catalyses the reaction L-aspartate 4-semialdehyde + pyruvate = (2S,4S)-4-hydroxy-2,3,4,5-tetrahydrodipicolinate + H2O + H(+). Its pathway is amino-acid biosynthesis; L-lysine biosynthesis via DAP pathway; (S)-tetrahydrodipicolinate from L-aspartate: step 3/4. Catalyzes the condensation of (S)-aspartate-beta-semialdehyde [(S)-ASA] and pyruvate to 4-hydroxy-tetrahydrodipicolinate (HTPA). The sequence is that of 4-hydroxy-tetrahydrodipicolinate synthase from Methanoculleus marisnigri (strain ATCC 35101 / DSM 1498 / JR1).